Consider the following 372-residue polypeptide: Queuine tRNA-ribosyltransferase (372 aa).

The active-site Proton acceptor is the aspartate 92. Residues 92–96 (DSGGY), aspartate 146, glutamine 188, and glycine 215 contribute to the substrate site. The tract at residues 246–252 (GIGSLRE) is RNA binding. Residue aspartate 265 is the Nucleophile of the active site. The tract at residues 270 to 274 (TRLGR) is RNA binding; important for wobble base 34 recognition. Positions 303, 305, 308, and 334 each coordinate Zn(2+).

It belongs to the queuine tRNA-ribosyltransferase family. As to quaternary structure, homodimer. Within each dimer, one monomer is responsible for RNA recognition and catalysis, while the other monomer binds to the replacement base PreQ1. Zn(2+) is required as a cofactor.

The enzyme catalyses 7-aminomethyl-7-carbaguanine + guanosine(34) in tRNA = 7-aminomethyl-7-carbaguanosine(34) in tRNA + guanine. It functions in the pathway tRNA modification; tRNA-queuosine biosynthesis. Catalyzes the base-exchange of a guanine (G) residue with the queuine precursor 7-aminomethyl-7-deazaguanine (PreQ1) at position 34 (anticodon wobble position) in tRNAs with GU(N) anticodons (tRNA-Asp, -Asn, -His and -Tyr). Catalysis occurs through a double-displacement mechanism. The nucleophile active site attacks the C1' of nucleotide 34 to detach the guanine base from the RNA, forming a covalent enzyme-RNA intermediate. The proton acceptor active site deprotonates the incoming PreQ1, allowing a nucleophilic attack on the C1' of the ribose to form the product. After dissociation, two additional enzymatic reactions on the tRNA convert PreQ1 to queuine (Q), resulting in the hypermodified nucleoside queuosine (7-(((4,5-cis-dihydroxy-2-cyclopenten-1-yl)amino)methyl)-7-deazaguanosine). The protein is Queuine tRNA-ribosyltransferase of Prochlorococcus marinus subsp. pastoris (strain CCMP1986 / NIES-2087 / MED4).